Consider the following 643-residue polypeptide: ATP-dependent RNA helicase DeaD (643 aa).

The Q motif motif lies at 6 to 34 (TTFADLGLKAPILEALTDLGYEKPSPIQA). Positions 37–208 (IPHLLDGRDV…RRFMKEPQEV (172 aa)) constitute a Helicase ATP-binding domain. Residue 50-57 (AQTGSGKT) participates in ATP binding. Positions 156–159 (DEAD) match the DEAD box motif. Residues 232–379 (KNEALVRFLE…EVELPNAELL (148 aa)) enclose the Helicase C-terminal domain. Disordered regions lie at residues 440-482 (VPPV…KRER) and 557-643 (MNMQ…GGDA). 2 stretches are compositionally biased toward basic and acidic residues: residues 448–482 (PRRE…KRER) and 567–643 (PRTE…GGDA).

The protein belongs to the DEAD box helicase family. DeaD/CsdA subfamily.

It localises to the cytoplasm. It catalyses the reaction ATP + H2O = ADP + phosphate + H(+). Functionally, DEAD-box RNA helicase involved in various cellular processes at low temperature, including ribosome biogenesis, mRNA degradation and translation initiation. The sequence is that of ATP-dependent RNA helicase DeaD from Klebsiella pneumoniae.